Here is a 438-residue protein sequence, read N- to C-terminus: Serine hydroxymethyltransferase (438 aa).

(6S)-5,6,7,8-tetrahydrofolate contacts are provided by residues leucine 119 and glycine 123–leucine 125. Lysine 228 carries the post-translational modification N6-(pyridoxal phosphate)lysine. Serine 370–phenylalanine 372 provides a ligand contact to (6S)-5,6,7,8-tetrahydrofolate.

This sequence belongs to the SHMT family. As to quaternary structure, homodimer. It depends on pyridoxal 5'-phosphate as a cofactor.

The protein localises to the cytoplasm. The enzyme catalyses (6R)-5,10-methylene-5,6,7,8-tetrahydrofolate + glycine + H2O = (6S)-5,6,7,8-tetrahydrofolate + L-serine. It participates in one-carbon metabolism; tetrahydrofolate interconversion. The protein operates within amino-acid biosynthesis; glycine biosynthesis; glycine from L-serine: step 1/1. Functionally, catalyzes the reversible interconversion of serine and glycine with tetrahydrofolate (THF) serving as the one-carbon carrier. This reaction serves as the major source of one-carbon groups required for the biosynthesis of purines, thymidylate, methionine, and other important biomolecules. Also exhibits THF-independent aldolase activity toward beta-hydroxyamino acids, producing glycine and aldehydes, via a retro-aldol mechanism. This chain is Serine hydroxymethyltransferase, found in Chlorobium chlorochromatii (strain CaD3).